Here is a 71-residue protein sequence, read N- to C-terminus: DNA-directed RNA polymerase subunit 10-like protein (71 aa).

Zn(2+) is bound by residues Cys-7, Cys-10, Cys-44, and Cys-45.

This sequence belongs to the archaeal Rpo10/eukaryotic RPB10 RNA polymerase subunit family. Interacts with IYO.

It localises to the nucleus. The sequence is that of DNA-directed RNA polymerase subunit 10-like protein from Arabidopsis thaliana (Mouse-ear cress).